A 316-amino-acid chain; its full sequence is Phospholipase A1 3 (316 aa).

Residues 1 to 4 (ADDL) form the signal peptide. The propeptide occupies 5–14 (TTLRNGTLDR). Residues C20 and C103 are joined by a disulfide bond. S153 (nucleophile) is an active-site residue. D181 (charge relay system) is an active-site residue. 2 cysteine pairs are disulfide-bonded: C192–C197 and C235–C240. The active-site Charge relay system is H242. 3 disulfide bridges follow: C257-C284, C258-C309, and C277-C282.

Belongs to the AB hydrolase superfamily. Lipase family. In terms of tissue distribution, expressed by the venom gland.

The protein localises to the secreted. It carries out the reaction a 1,2-diacyl-sn-glycero-3-phosphocholine + H2O = a 2-acyl-sn-glycero-3-phosphocholine + a fatty acid + H(+). Catalyzes the hydrolysis of phosphatidylcholine with phospholipase A1 activity. May act as an allergen and induce hemolytic activity. This Polistes dominula (European paper wasp) protein is Phospholipase A1 3.